The following is a 283-amino-acid chain: Phosphatidylglycerol--prolipoprotein diacylglyceryl transferase (283 aa).

3 helical membrane-spanning segments follow: residues 17 to 37 (LAVR…TFLG), 56 to 76 (FLTW…VLFY), and 92 to 112 (WEGG…IWLF). Arg139 serves as a coordination point for a 1,2-diacyl-sn-glycero-3-phospho-(1'-sn-glycerol). 2 helical membrane-spanning segments follow: residues 222–242 (GQTA…AEFA) and 255–275 (GLSM…VGFV).

The protein belongs to the Lgt family.

Its subcellular location is the cell inner membrane. It carries out the reaction L-cysteinyl-[prolipoprotein] + a 1,2-diacyl-sn-glycero-3-phospho-(1'-sn-glycerol) = an S-1,2-diacyl-sn-glyceryl-L-cysteinyl-[prolipoprotein] + sn-glycerol 1-phosphate + H(+). Its pathway is protein modification; lipoprotein biosynthesis (diacylglyceryl transfer). Its function is as follows. Catalyzes the transfer of the diacylglyceryl group from phosphatidylglycerol to the sulfhydryl group of the N-terminal cysteine of a prolipoprotein, the first step in the formation of mature lipoproteins. This chain is Phosphatidylglycerol--prolipoprotein diacylglyceryl transferase, found in Neisseria gonorrhoeae (strain ATCC 700825 / FA 1090).